Consider the following 408-residue polypeptide: Acetate kinase (408 aa).

Asn-10 contributes to the Mg(2+) binding site. Residue Lys-17 participates in ATP binding. A substrate-binding site is contributed by Arg-96. Asp-153 functions as the Proton donor/acceptor in the catalytic mechanism. ATP-binding positions include 213 to 217 and 288 to 290; these read HLGNG and DLR. Position 393 (Glu-393) interacts with Mg(2+).

The protein belongs to the acetokinase family. In terms of assembly, homodimer. It depends on Mg(2+) as a cofactor. Mn(2+) is required as a cofactor.

It localises to the cytoplasm. It catalyses the reaction acetate + ATP = acetyl phosphate + ADP. Its pathway is metabolic intermediate biosynthesis; acetyl-CoA biosynthesis; acetyl-CoA from acetate: step 1/2. Functionally, catalyzes the formation of acetyl phosphate from acetate and ATP. Can also catalyze the reverse reaction. In Borrelia recurrentis (strain A1), this protein is Acetate kinase.